The primary structure comprises 524 residues: Nucleoporin NUP56 (524 aa).

Residues 1 to 219 (MADDPHNTST…SSMAKFASST (219 aa)) are disordered. Composition is skewed to basic and acidic residues over residues 28–80 (VKED…EPEK), 114–168 (THDE…KEVE), and 179–199 (SAEKPKIEEKKDESKDTKVDK). The Nuclear localization signal signature appears at 37–44 (ARRELKQT). A coiled-coil region spans residues 111-133 (KKRTHDELEQDGKEEEEKKEGEK). Positions 200-219 (PQTSSSAFANSSMAKFASST) are enriched in polar residues. FG repeat units lie at residues 223-224 (FG), 226-227 (FG), 237-238 (FG), 247-248 (FG), 266-267 (FG), 312-313 (FG), and 328-329 (FG). Disordered regions lie at residues 247 to 284 (FGSKSADASAAPAGPPKLSFGSASAASPFASLNGQAGG) and 300 to 371 (GSSA…GEEK). Residues 248–277 (GSKSADASAAPAGPPKLSFGSASAASPFAS) show a composition bias toward low complexity. Acidic residues-rich tracts occupy residues 332–345 (ESDEEDEGEGEEGE) and 352–362 (GEGEEKEEEEK). Residues 345 to 376 (EENKSENGEGEEKEEEEKEEKASGEEKKKFKL) are a coiled coil. One can recognise a RanBD1 domain in the interval 377–475 (QKVHIDDGEG…TPILPAMKFQ (99 aa)). Positions 503–524 (SQANATQFSNMVEKIKEKLAAA) form a coiled coil.

In terms of assembly, the nuclear pore complex (NPC) constitutes the exclusive means of nucleocytoplasmic transport. NPCs allow the passive diffusion of ions and small molecules and the active, nuclear transport receptor-mediated bidirectional transport of macromolecules such as proteins, RNAs, ribonucleoparticles (RNPs), and ribosomal subunits across the nuclear envelope. The 55-60 MDa NPC is composed of at least 28 different subunits: AMO1, ELYS, GLE1, GLE2, MLP1, NDC1, NIC96, NSP1, NUP133, NUP145, NUP152, NUP159, NUP170, NUP188, NUP192, NUP37, NUP49, NUP53, NUP56, NUP57, NUP82, NUP84, NUP85, POM152, POM33, POM34, SEC13 and SEH1. Due to its 8-fold rotational symmetry, all subunits are present with 8 copies or multiples thereof.

It is found in the nucleus. The protein localises to the nuclear pore complex. Its subcellular location is the nucleus membrane. Its function is as follows. Functions as a component of the nuclear pore complex (NPC). NPC components, collectively referred to as nucleoporins (NUPs), can play the role of both NPC structural components and of docking or interaction partners for transiently associated nuclear transport factors. Active directional transport is assured by both, a Phe-Gly (FG) repeat affinity gradient for these transport factors across the NPC and a transport cofactor concentration gradient across the nuclear envelope (GSP1 and GSP2 GTPases associated predominantly with GTP in the nucleus, with GDP in the cytoplasm). The polypeptide is Nucleoporin NUP56 (NUP56) (Chaetomium thermophilum (strain DSM 1495 / CBS 144.50 / IMI 039719) (Thermochaetoides thermophila)).